The primary structure comprises 598 residues: Elongation factor 4 (598 aa).

The 183-residue stretch at 2-184 (DHIRNFSIIA…AIVKRVPPPR (183 aa)) folds into the tr-type G domain. GTP is bound by residues 14–19 (DHGKST) and 131–134 (NKID).

This sequence belongs to the TRAFAC class translation factor GTPase superfamily. Classic translation factor GTPase family. LepA subfamily.

It is found in the cell inner membrane. It carries out the reaction GTP + H2O = GDP + phosphate + H(+). Functionally, required for accurate and efficient protein synthesis under certain stress conditions. May act as a fidelity factor of the translation reaction, by catalyzing a one-codon backward translocation of tRNAs on improperly translocated ribosomes. Back-translocation proceeds from a post-translocation (POST) complex to a pre-translocation (PRE) complex, thus giving elongation factor G a second chance to translocate the tRNAs correctly. Binds to ribosomes in a GTP-dependent manner. The protein is Elongation factor 4 of Syntrophus aciditrophicus (strain SB).